Consider the following 126-residue polypeptide: Nucleoside diphosphate kinase B (126 aa).

Positions 6, 37, 68, 79, and 89 each coordinate ATP. Catalysis depends on H92, which acts as the Pros-phosphohistidine intermediate.

This sequence belongs to the NDK family. Mg(2+) is required as a cofactor.

The protein localises to the cytoplasm. The protein resides in the nucleus. It localises to the cell projection. Its subcellular location is the lamellipodium. It is found in the ruffle. It carries out the reaction a 2'-deoxyribonucleoside 5'-diphosphate + ATP = a 2'-deoxyribonucleoside 5'-triphosphate + ADP. The catalysed reaction is a ribonucleoside 5'-diphosphate + ATP = a ribonucleoside 5'-triphosphate + ADP. Its function is as follows. Major role in the synthesis of nucleoside triphosphates other than ATP. The polypeptide is Nucleoside diphosphate kinase B (nme2) (Merluccius capensis (Shallow-water Cape hake)).